The chain runs to 135 residues: Transcriptional activator protein (135 aa).

The Nuclear localization signal motif lies at 17 to 32 (KIQHHIAKKRQVRRRR). A zinc finger lies at 37–54 (CGCSYYIHLDCINHGFTH). The interval 120–135 (HLDDLTVSDWSFFKSL) is transactivation.

The protein belongs to the geminiviridae transcriptional activator protein family. In terms of assembly, monomer. Homodimer. Homooligomer. Self-interaction correlates with nuclear localization and efficient activation of transcription. Monomers suppress local silencing by interacting with and inactivating host adenosine kinase 2 (ADK2) in the cytoplasm. Interacts with and inhibits host SNF1 kinase. Binds to ssDNA. May interact with host RPS27A. Phosphorylated.

Its subcellular location is the host nucleus. The protein localises to the host cytoplasm. Its function is as follows. Multifunctional protein that modulates host antiviral defenses and promotes host attractiveness to insect vectors. Acts as a suppressor of RNA-mediated gene silencing, also known as post-transcriptional gene silencing (PTGS), a mechanism of plant viral defense that limits the accumulation of viral RNAs. TrAP suppresses the host RNA silencing by inhibiting adenosine kinase 2 (ADK2), a kinase involved in a general methylation pathway. Also suppresses the host basal defense by interacting with and inhibiting SNF1 kinase, a key regulator of cell metabolism implicated in innate antiviral defense. Functionally, inhibits signal transduction by the phytohormone jasmonate, making the infected plant more attractive to aphids, which are the second host to play a role as a dissemination vector. Acts by binding to ubiquitin precursor RPS27A, thereby preventing ubiquitin degradation of JAZ. The sequence is that of Transcriptional activator protein from Capsicum annuum (Capsicum pepper).